We begin with the raw amino-acid sequence, 345 residues long: Tyrosine--tRNA ligase (345 aa).

Y36 contributes to the L-tyrosine binding site. The 'HIGH' region motif lies at 41 to 49 (PTGEMHIGH). L-tyrosine contacts are provided by Y163, Q167, D170, and Q185.

Belongs to the class-I aminoacyl-tRNA synthetase family. TyrS type 3 subfamily. As to quaternary structure, homodimer.

It localises to the cytoplasm. The enzyme catalyses tRNA(Tyr) + L-tyrosine + ATP = L-tyrosyl-tRNA(Tyr) + AMP + diphosphate + H(+). Catalyzes the attachment of tyrosine to tRNA(Tyr) in a two-step reaction: tyrosine is first activated by ATP to form Tyr-AMP and then transferred to the acceptor end of tRNA(Tyr). In Natronomonas pharaonis (strain ATCC 35678 / DSM 2160 / CIP 103997 / JCM 8858 / NBRC 14720 / NCIMB 2260 / Gabara) (Halobacterium pharaonis), this protein is Tyrosine--tRNA ligase.